The sequence spans 848 residues: Coiled-coil domain-containing protein 110 (848 aa).

The interval 41-62 (SEGVKESGGNEPEYGCASEPEN) is disordered. Residues 442–794 (LQNYLKESLQ…LSDKVSSQNN (353 aa)) are a coiled coil. Ser-620 is subject to Phosphoserine.

It localises to the nucleus. This chain is Coiled-coil domain-containing protein 110 (Ccdc110), found in Mus musculus (Mouse).